A 67-amino-acid chain; its full sequence is SPbeta prophage-derived uncharacterized protein YoqF (67 aa).

The polypeptide is SPbeta prophage-derived uncharacterized protein YoqF (yoqF) (Bacillus subtilis (strain 168)).